Consider the following 357-residue polypeptide: Protein-arginine kinase (357 aa).

In terms of domain architecture, Phosphagen kinase C-terminal spans 24 to 256 (VIISSRVRLA…LQLVTQERAA (233 aa)). ATP is bound by residues 27-31 (SSRVR), H93, R127, 178-182 (RASVM), and 209-214 (RGLYGE). The short motif at 339–344 (RDIFRA) is the RDXXRA motif of the pArg binding pocket involved in allosteric regulation element.

It belongs to the ATP:guanido phosphotransferase family.

The catalysed reaction is L-arginyl-[protein] + ATP = N(omega)-phospho-L-arginyl-[protein] + ADP + H(+). Appears to be allosterically activated by the binding of pArg-containing polypeptides to the pArg-binding pocket localized in the C-terminal domain of McsB. Catalyzes the specific phosphorylation of arginine residues in proteins. The protein is Protein-arginine kinase of Desulforamulus reducens (strain ATCC BAA-1160 / DSM 100696 / MI-1) (Desulfotomaculum reducens).